A 205-amino-acid chain; its full sequence is Thymidine kinase (205 aa).

Residues 9 to 16 and 87 to 90 each bind ATP; these read SAMNAGKS and DESQ. Residue E88 is the Proton acceptor of the active site. Zn(2+)-binding residues include C145, C147, C182, and H185.

The protein belongs to the thymidine kinase family. Homotetramer.

It is found in the cytoplasm. It catalyses the reaction thymidine + ATP = dTMP + ADP + H(+). The chain is Thymidine kinase from Salmonella choleraesuis (strain SC-B67).